Here is a 232-residue protein sequence, read N- to C-terminus: Ribose-5-phosphate isomerase A (232 aa).

Residues 28-31 (TGST), 83-86 (DGAD), and 96-99 (KGGG) contribute to the substrate site. The active-site Proton acceptor is the Glu105. A substrate-binding site is contributed by Lys123.

The protein belongs to the ribose 5-phosphate isomerase family. Homodimer.

It catalyses the reaction aldehydo-D-ribose 5-phosphate = D-ribulose 5-phosphate. It functions in the pathway carbohydrate degradation; pentose phosphate pathway; D-ribose 5-phosphate from D-ribulose 5-phosphate (non-oxidative stage): step 1/1. In terms of biological role, catalyzes the reversible conversion of ribose-5-phosphate to ribulose 5-phosphate. In Rhizobium leguminosarum bv. trifolii (strain WSM2304), this protein is Ribose-5-phosphate isomerase A.